Here is a 128-residue protein sequence, read N- to C-terminus: Ribonuclease pancreatic (128 aa).

The segment covering 1–13 (GESRAEKFQRQHM) has biased composition (basic and acidic residues). The segment at 1-24 (GESRAEKFQRQHMDSGSSPSSSST) is disordered. Substrate is bound by residues Lys-7 and Arg-10. The active-site Proton acceptor is His-12. Intrachain disulfides connect Cys-26/Cys-84, Cys-40/Cys-95, Cys-58/Cys-110, and Cys-65/Cys-72. Residue Asn-34 is glycosylated (N-linked (GlcNAc...) asparagine). Substrate contacts are provided by residues 41-45 (KSVNT), Lys-66, and Arg-85. Catalysis depends on His-119, which acts as the Proton donor.

Belongs to the pancreatic ribonuclease family. In terms of assembly, monomer. Interacts with and forms tight 1:1 complexes with RNH1. Dimerization of two such complexes may occur. Interaction with RNH1 inhibits this protein. Pancreas and other tissues and body fluids (indicating it may have other physiological functions besides its role in digestion).

Its subcellular location is the secreted. It carries out the reaction an [RNA] containing cytidine + H2O = an [RNA]-3'-cytidine-3'-phosphate + a 5'-hydroxy-ribonucleotide-3'-[RNA].. The enzyme catalyses an [RNA] containing uridine + H2O = an [RNA]-3'-uridine-3'-phosphate + a 5'-hydroxy-ribonucleotide-3'-[RNA].. In terms of biological role, endonuclease that catalyzes the cleavage of RNA on the 3' side of pyrimidine nucleotides. Acts on single-stranded and double-stranded RNA. This chain is Ribonuclease pancreatic (RNASE1), found in Semnopithecus entellus (Northern plains gray langur).